The following is a 192-amino-acid chain: GTP-binding protein RHO2 (192 aa).

14–21 (GDGACGKT) contacts GTP. The short motif at 36–44 (YHPTVFENY) is the Effector region element. GTP is bound by residues 61–65 (DTAGQ) and 119–122 (LKKD). The S-palmitoyl cysteine moiety is linked to residue Cys-188. Cys-189 bears the Cysteine methyl ester mark. Cys-189 is lipidated: S-geranylgeranyl cysteine. Residues 190 to 192 (IIL) constitute a propeptide, removed in mature form.

Belongs to the small GTPase superfamily. Rho family. As to quaternary structure, interacts with BEM4.

The protein localises to the cell membrane. The catalysed reaction is GTP + H2O = GDP + phosphate + H(+). The sequence is that of GTP-binding protein RHO2 (RHO2) from Saccharomyces cerevisiae (strain ATCC 204508 / S288c) (Baker's yeast).